The primary structure comprises 271 residues: MPELPEVETTLRGLAPHLVGQRIHGVILRRPDLRWPIAAQIEQLLPGATITDVRRRAKYLLIDTDAGGSAVLHLGMSGSLRVLPGDTPPRAHDHVDISLQNGRVLRFNDPRRFGCLLWQRDCETHELLASLGPEPLSAAFTGDYLHALACGRRAAVKTFLMDQAVVVGVGNIYAAESLHRAGISPLREAGKVSRERYRRLADAVKEILAYAIQRGGTTLRDFISPDGAPGYFEQELMVYGREGEACRHCGGELKHATIGQRATVWCAACQR.

Residue proline 2 is the Schiff-base intermediate with DNA of the active site. The Proton donor role is filled by glutamate 3. Lysine 58 (proton donor; for beta-elimination activity) is an active-site residue. DNA is bound by residues histidine 92, arginine 111, and arginine 152. The FPG-type zinc-finger motif lies at 237–271 (MVYGREGEACRHCGGELKHATIGQRATVWCAACQR). Residue arginine 261 is the Proton donor; for delta-elimination activity of the active site.

Belongs to the FPG family. As to quaternary structure, monomer. Zn(2+) is required as a cofactor.

It catalyses the reaction Hydrolysis of DNA containing ring-opened 7-methylguanine residues, releasing 2,6-diamino-4-hydroxy-5-(N-methyl)formamidopyrimidine.. The enzyme catalyses 2'-deoxyribonucleotide-(2'-deoxyribose 5'-phosphate)-2'-deoxyribonucleotide-DNA = a 3'-end 2'-deoxyribonucleotide-(2,3-dehydro-2,3-deoxyribose 5'-phosphate)-DNA + a 5'-end 5'-phospho-2'-deoxyribonucleoside-DNA + H(+). Involved in base excision repair of DNA damaged by oxidation or by mutagenic agents. Acts as a DNA glycosylase that recognizes and removes damaged bases. Has a preference for oxidized purines, such as 7,8-dihydro-8-oxoguanine (8-oxoG). Has AP (apurinic/apyrimidinic) lyase activity and introduces nicks in the DNA strand. Cleaves the DNA backbone by beta-delta elimination to generate a single-strand break at the site of the removed base with both 3'- and 5'-phosphates. This chain is Formamidopyrimidine-DNA glycosylase, found in Xanthomonas campestris pv. campestris (strain ATCC 33913 / DSM 3586 / NCPPB 528 / LMG 568 / P 25).